Reading from the N-terminus, the 65-residue chain is Large ribosomal subunit protein bL35 (65 aa).

The protein belongs to the bacterial ribosomal protein bL35 family.

In Caldicellulosiruptor saccharolyticus (strain ATCC 43494 / DSM 8903 / Tp8T 6331), this protein is Large ribosomal subunit protein bL35.